Reading from the N-terminus, the 923-residue chain is Mitochondrial 10-formyltetrahydrofolate dehydrogenase (923 aa).

The transit peptide at 1–19 (MLRRGSQALRRFSTGRVYF) directs the protein to the mitochondrion; not cleaved. Residues 23-331 (LKLALIGQSL…PASQYFSTGE (309 aa)) are hydrolase domain. Serine 31 is modified (phosphoserine). Position 60 is an N6-succinyllysine (lysine 60). 110–112 (QFI) is a binding site for (6R)-10-formyltetrahydrofolate. Residue histidine 128 is the Proton donor of the active site. (6R)-10-formyltetrahydrofolate is bound at residue aspartate 164. Residues 339–416 (AEEVKVAETI…GFIQKVVRKL (78 aa)) form the Carrier domain. Serine 375 is modified (O-(pantetheine 4'-phosphoryl)serine). The segment at 438-923 (MVKMPYQCFI…LKTKTVTLEY (486 aa)) is aldehyde dehydrogenase domain. NADP(+)-binding positions include 592–594 (IPW) and 618–621 (KPAQ). Serine 650 is modified (phosphoserine). Residues 651–656 (GGIAGQ) and 671–672 (GS) each bind NADP(+). N6-succinyllysine is present on lysine 681. The active-site Proton acceptor is the glutamate 694. An NADP(+)-binding site is contributed by 694–695 (EL). The active-site Proton donor is cysteine 728. Position 778 (lysine 778) interacts with NADP(+). Residue lysine 788 is modified to N6-succinyllysine. Residue 825 to 827 (ESF) participates in NADP(+) binding. N6-acetyllysine is present on lysine 903.

It in the N-terminal section; belongs to the GART family. In the C-terminal section; belongs to the aldehyde dehydrogenase family. ALDH1L subfamily. Phosphopantetheinylation at Ser-375 by AASDHPPT is required for the formyltetrahydrofolate dehydrogenase activity. Highly expressed in pancreas, heart, brain and skeletal muscle.

The protein resides in the mitochondrion. It catalyses the reaction (6R)-10-formyltetrahydrofolate + NADP(+) + H2O = (6S)-5,6,7,8-tetrahydrofolate + CO2 + NADPH + H(+). Functionally, mitochondrial 10-formyltetrahydrofolate dehydrogenase that catalyzes the NADP(+)-dependent conversion of 10-formyltetrahydrofolate to tetrahydrofolate and carbon dioxide. The chain is Mitochondrial 10-formyltetrahydrofolate dehydrogenase from Homo sapiens (Human).